Here is a 129-residue protein sequence, read N- to C-terminus: Aspartate 1-decarboxylase (129 aa).

The Schiff-base intermediate with substrate; via pyruvic acid role is filled by S25. S25 is subject to Pyruvic acid (Ser). T57 is a substrate binding site. The Proton donor role is filled by Y58. G73 to A75 is a binding site for substrate.

It belongs to the PanD family. Heterooctamer of four alpha and four beta subunits. The cofactor is pyruvate. In terms of processing, is synthesized initially as an inactive proenzyme, which is activated by self-cleavage at a specific serine bond to produce a beta-subunit with a hydroxyl group at its C-terminus and an alpha-subunit with a pyruvoyl group at its N-terminus.

Its subcellular location is the cytoplasm. It carries out the reaction L-aspartate + H(+) = beta-alanine + CO2. It participates in cofactor biosynthesis; (R)-pantothenate biosynthesis; beta-alanine from L-aspartate: step 1/1. In terms of biological role, catalyzes the pyruvoyl-dependent decarboxylation of aspartate to produce beta-alanine. The protein is Aspartate 1-decarboxylase of Prosthecochloris aestuarii (strain DSM 271 / SK 413).